Reading from the N-terminus, the 222-residue chain is UPF0488 protein C8orf33 homolog (222 aa).

Low complexity predominate over residues Met-1–Ser-16. Disordered regions lie at residues Met-1–Leu-103, Lys-119–Pro-146, and Val-186–Pro-210. Ala-2 is subject to N-acetylalanine. The segment covering Arg-17–Pro-28 has biased composition (basic residues). An Omega-N-methylarginine modification is found at Arg-27. Residues Ser-29 to Pro-39 show a composition bias toward low complexity. Phosphoserine is present on Ser-75. Residues Pro-93 to Leu-103 show a composition bias toward low complexity.

The protein belongs to the UPF0488 family.

The protein is UPF0488 protein C8orf33 homolog of Mus musculus (Mouse).